Reading from the N-terminus, the 180-residue chain is Adenine phosphoribosyltransferase (180 aa).

N-acetylalanine is present on Ala-2. Ser-15 and Ser-30 each carry phosphoserine. At Tyr-60 the chain carries Phosphotyrosine. Phosphoserine is present on Ser-66. Phosphothreonine is present on Thr-135.

Belongs to the purine/pyrimidine phosphoribosyltransferase family. In terms of assembly, homodimer.

It localises to the cytoplasm. It catalyses the reaction AMP + diphosphate = 5-phospho-alpha-D-ribose 1-diphosphate + adenine. It functions in the pathway purine metabolism; AMP biosynthesis via salvage pathway; AMP from adenine: step 1/1. Its function is as follows. Catalyzes a salvage reaction resulting in the formation of AMP, that is energically less costly than de novo synthesis. In Bos taurus (Bovine), this protein is Adenine phosphoribosyltransferase.